The sequence spans 105 residues: Pyrimidine/purine nucleoside phosphorylase (105 aa).

The protein belongs to the nucleoside phosphorylase PpnP family.

The catalysed reaction is a purine D-ribonucleoside + phosphate = a purine nucleobase + alpha-D-ribose 1-phosphate. It catalyses the reaction adenosine + phosphate = alpha-D-ribose 1-phosphate + adenine. The enzyme catalyses cytidine + phosphate = cytosine + alpha-D-ribose 1-phosphate. It carries out the reaction guanosine + phosphate = alpha-D-ribose 1-phosphate + guanine. The catalysed reaction is inosine + phosphate = alpha-D-ribose 1-phosphate + hypoxanthine. It catalyses the reaction thymidine + phosphate = 2-deoxy-alpha-D-ribose 1-phosphate + thymine. The enzyme catalyses uridine + phosphate = alpha-D-ribose 1-phosphate + uracil. It carries out the reaction xanthosine + phosphate = alpha-D-ribose 1-phosphate + xanthine. Catalyzes the phosphorolysis of diverse nucleosides, yielding D-ribose 1-phosphate and the respective free bases. Can use uridine, adenosine, guanosine, cytidine, thymidine, inosine and xanthosine as substrates. Also catalyzes the reverse reactions. The polypeptide is Pyrimidine/purine nucleoside phosphorylase (Albidiferax ferrireducens (strain ATCC BAA-621 / DSM 15236 / T118) (Rhodoferax ferrireducens)).